Here is a 214-residue protein sequence, read N- to C-terminus: ATP-dependent Clp protease proteolytic subunit (214 aa).

S106 acts as the Nucleophile in catalysis. H131 is a catalytic residue.

It belongs to the peptidase S14 family. As to quaternary structure, fourteen ClpP subunits assemble into 2 heptameric rings which stack back to back to give a disk-like structure with a central cavity, resembling the structure of eukaryotic proteasomes.

It localises to the cytoplasm. The enzyme catalyses Hydrolysis of proteins to small peptides in the presence of ATP and magnesium. alpha-casein is the usual test substrate. In the absence of ATP, only oligopeptides shorter than five residues are hydrolyzed (such as succinyl-Leu-Tyr-|-NHMec, and Leu-Tyr-Leu-|-Tyr-Trp, in which cleavage of the -Tyr-|-Leu- and -Tyr-|-Trp bonds also occurs).. In terms of biological role, cleaves peptides in various proteins in a process that requires ATP hydrolysis. Has a chymotrypsin-like activity. Plays a major role in the degradation of misfolded proteins. This is ATP-dependent Clp protease proteolytic subunit from Rhodopseudomonas palustris (strain BisB5).